Here is a 361-residue protein sequence, read N- to C-terminus: DNA replication and repair protein RecF (361 aa).

30–37 (GDNAQGKT) contributes to the ATP binding site.

The protein belongs to the RecF family.

The protein localises to the cytoplasm. Functionally, the RecF protein is involved in DNA metabolism; it is required for DNA replication and normal SOS inducibility. RecF binds preferentially to single-stranded, linear DNA. It also seems to bind ATP. This Clostridium novyi (strain NT) protein is DNA replication and repair protein RecF.